The chain runs to 146 residues: Hemoglobin subunit beta (146 aa).

Alanine 1 is subject to N-acetylalanine. Positions 2–146 (SFDPHEKQLI…VAAALAAEYH (145 aa)) constitute a Globin domain. Histidine 63 and histidine 92 together coordinate heme b.

Belongs to the globin family. In terms of assembly, heterotetramer of two alpha chains and two beta chains. In terms of tissue distribution, red blood cells.

Its function is as follows. Involved in oxygen transport from the lung to the various peripheral tissues. This is Hemoglobin subunit beta (HBB) from Crocodylus niloticus (Nile crocodile).